We begin with the raw amino-acid sequence, 388 residues long: MVAPLLVFLFSLQLCHTTSWAYVGGNSLNSNSLHASYSEFPAGTSNEVPEDAANGQDDNDDSQLTEPNDNNAPLVQSIDDETEMQFPKPIQWVSIDHLRNSIILRFQNPTPKILNKLDPEEMKRLRSLQENAMRWGKRSYESYPLNRNGLADKSSVGRMGFLSNHQVIRDSRGDNFMRFGRSVGGSGGNDDNFMRFGRASGSSDFMRFGRAGQDNFMRFGRAAGQDFMRFGRGSGQDFMRFGRSPGSQDFMRFGRNPGSQDFMRFGRSPGSQDFMRFGRNPGSQDFMRFGRNPGSQDFMRFGRNPGSQDFMRFGRASGGQDFMRFGRAPSGQDFMRFGRPDNFMRFGRTPAQSSDFMRFGRTPTQSSDFMRFGKSLDKSENKTSDLQK.

The first 21 residues, 1–21 (MVAPLLVFLFSLQLCHTTSWA), serve as a signal peptide directing secretion. Residues 22 to 172 (YVGGNSLNSN…SNHQVIRDSR (151 aa)) constitute a propeptide that is removed on maturation. A disordered region spans residues 40-74 (FPAGTSNEVPEDAANGQDDNDDSQLTEPNDNNAPL). The segment covering 64-74 (LTEPNDNNAPL) has biased composition (polar residues). A phenylalanine amide mark is found at phenylalanine 179, phenylalanine 196, phenylalanine 208, phenylalanine 219, phenylalanine 230, phenylalanine 241, phenylalanine 253, phenylalanine 265, phenylalanine 277, phenylalanine 289, phenylalanine 301, phenylalanine 313, phenylalanine 325, phenylalanine 337, phenylalanine 346, phenylalanine 359, and phenylalanine 372. Positions 360 to 388 (GRTPTQSSDFMRFGKSLDKSENKTSDLQK) are disordered. Residues 374-388 (KSLDKSENKTSDLQK) show a composition bias toward basic and acidic residues. Positions 375 to 388 (SLDKSENKTSDLQK) are excised as a propeptide.

Belongs to the FARP (FMRFamide related peptide) family. In terms of tissue distribution, in the brain, expressed in 2 large cells in the lateral neurons in each optic lobe, 2 slightly bigger cells on both sides of the tritocerebrum, around 14 small cells in the dorsal area, around 13 cells in the subesophageal ganglion, and in the central brain.

It localises to the secreted. The polypeptide is FMRFamide neuropeptides (Musca domestica (House fly)).